The primary structure comprises 118 residues: UPF0102 protein Francci3_3586 (118 aa).

This sequence belongs to the UPF0102 family.

The chain is UPF0102 protein Francci3_3586 from Frankia casuarinae (strain DSM 45818 / CECT 9043 / HFP020203 / CcI3).